A 384-amino-acid chain; its full sequence is Bacterial ceramide synthase (384 aa).

It is found in the cytoplasm. It catalyses the reaction 3-oxosphinganine + a fatty acyl-CoA = N-acyl-3-oxosphinganine + CoA + H(+). It carries out the reaction 3-oxosphinganine + tetradecanoyl-CoA = N-tetradecanoyl-3-oxosphinganine + CoA + H(+). The enzyme catalyses 3-oxosphinganine + hexadecanoyl-CoA = N-hexadecanoyl-3-oxosphinganine + CoA + H(+). The catalysed reaction is 3-oxosphinganine + (9Z)-hexadecenoyl-CoA = N-(9Z-hexadecenoyl)-3-oxosphinganine + CoA + H(+). It catalyses the reaction 3-oxosphinganine + octanoyl-CoA = N-octanoyl-3-oxosphinganine + CoA + H(+). It carries out the reaction 3-oxosphinganine + decanoyl-CoA = N-decanoyl-3-oxosphinganine + CoA + H(+). The enzyme catalyses 3-oxosphinganine + dodecanoyl-CoA = N-dodecanoyl-3-oxosphinganine + CoA + H(+). The catalysed reaction is 3-oxosphinganine + octadecanoyl-CoA = N-octadecanoyl-3-oxosphinganine + CoA + H(+). It catalyses the reaction 3-oxosphinganine + eicosanoyl-CoA = N-eicosanoyl-3-oxosphinganine + CoA + H(+). It carries out the reaction 3-oxosphinganine + docosanoyl-CoA = N-docosanoyl-3-ketodihydrosphingosine + CoA + H(+). The enzyme catalyses 3-oxosphinganine + tetracosanoyl-CoA = N-tetracosanoyl-3-oxosphinganine + CoA + H(+). Its pathway is lipid metabolism; sphingolipid metabolism. Its function is as follows. Involved in de novo bacterial ceramide synthesis. Catalyzes the condensation of 3-oxosphinganine with an acyl-CoA to generate oxidized ceramides. Can use acyl-CoA substrates ranging from C8 to C24, with highest in vitro activity with C14 and very little activity with acyl-CoA thioesters of 18 carbons or longer. May have a preference for monounsaturated acyl-CoA substrates, as it has a threefold greater preference for C16:1-CoA over C16:0-CoA as a substrate in vitro. In Caulobacter vibrioides (strain NA1000 / CB15N) (Caulobacter crescentus), this protein is Bacterial ceramide synthase.